The chain runs to 196 residues: Inosine triphosphate pyrophosphatase 1 (196 aa).

20–25 (TGNDGK) lines the ITP pocket. E48 contacts Mg(2+). Residues K61, 77–78 (DT), K94, 153–156 (FGWD), K177, and 182–183 (PR) each bind ITP.

It belongs to the HAM1 NTPase family. Homodimer. Mg(2+) is required as a cofactor. Requires Mn(2+) as cofactor.

It is found in the cytoplasm. It catalyses the reaction ITP + H2O = IMP + diphosphate + H(+). The catalysed reaction is dITP + H2O = dIMP + diphosphate + H(+). The enzyme catalyses XTP + H2O = XMP + diphosphate + H(+). Pyrophosphatase that hydrolyzes non-canonical purine nucleotides such as inosine triphosphate (ITP), deoxyinosine triphosphate (dITP) or xanthosine 5'-triphosphate (XTP) to their respective monophosphate derivatives. The enzyme does not distinguish between the deoxy- and ribose forms. Probably excludes non-canonical purines from RNA and DNA precursor pools, thus preventing their incorporation into RNA and DNA and avoiding chromosomal lesions. This is Inosine triphosphate pyrophosphatase 1 from Trypanosoma cruzi (strain CL Brener).